We begin with the raw amino-acid sequence, 397 residues long: Phosphoglycerate kinase (397 aa).

Residues 25-27 (DLN), arginine 41, 64-67 (HLGR), arginine 118, and arginine 151 contribute to the substrate site. ATP contacts are provided by residues lysine 202, glutamate 324, and 350-353 (GGDT).

It belongs to the phosphoglycerate kinase family. Monomer.

It localises to the cytoplasm. The catalysed reaction is (2R)-3-phosphoglycerate + ATP = (2R)-3-phospho-glyceroyl phosphate + ADP. It participates in carbohydrate degradation; glycolysis; pyruvate from D-glyceraldehyde 3-phosphate: step 2/5. This Herminiimonas arsenicoxydans protein is Phosphoglycerate kinase.